Consider the following 1029-residue polypeptide: Tyrosine-protein kinase-like otk (1029 aa).

A signal peptide spans Met1–Ala18. Over Ser19–Ala577 the chain is Extracellular. 5 Ig-like C2-type domains span residues Ser21–Ser104, Pro105–Ser195, Pro247–Ser361, Pro364–Asn459, and Pro464–Val554. The N-linked (GlcNAc...) asparagine glycan is linked to Asn35. 4 disulfide bridges follow: Cys42/Cys91, Cys133/Cys184, Cys272/Cys350, and Cys395/Cys443. N-linked (GlcNAc...) asparagine glycosylation is found at Asn332, Asn413, Asn425, Asn440, Asn453, Asn508, and Asn520. Cys486 and Cys538 are joined by a disulfide. The helical transmembrane segment at Val578–Trp598 threads the bilayer. Over Cys599–Lys1029 the chain is Cytoplasmic. 2 disordered regions span residues Leu613–Ala675 and Ser714–Met756. Over residues Lys651–Arg669 the composition is skewed to polar residues. A Phosphoserine modification is found at Ser674. The Protein kinase; inactive domain occupies Leu688–Met1024. A compositionally biased stretch (basic and acidic residues) spans Ser716–Ser727.

It belongs to the protein kinase superfamily. Tyr protein kinase family. Insulin receptor subfamily. As to quaternary structure, interacts with plexA; component of a receptor complex that mediates the repulsive signaling in response to Semaphorin ligands.

Its subcellular location is the cell membrane. Acts as a calcium-dependent, homophilic cell adhesion molecule that regulates neural recognition during the development of the nervous system. Component of the repulsive Plexin signaling response to regulate motor axon guidance at the embryonic stage. Also component of a receptor complex that is required in the adult visual system to innervate the lamina layer; specific targeting of R1-R6 axons. This is Tyrosine-protein kinase-like otk from Drosophila sechellia (Fruit fly).